The following is a 513-amino-acid chain: 2-isopropylmalate synthase (513 aa).

Residues 5–268 (LIIFDTTLRD…EVGIDTTQIV (264 aa)) enclose the Pyruvate carboxyltransferase domain. Mn(2+) contacts are provided by aspartate 14, histidine 202, histidine 204, and asparagine 239. The regulatory domain stretch occupies residues 394 to 513 (RLLSLEQQSA…SKNERVAAQG (120 aa)).

The protein belongs to the alpha-IPM synthase/homocitrate synthase family. LeuA type 1 subfamily. As to quaternary structure, homodimer. Requires Mn(2+) as cofactor.

The protein localises to the cytoplasm. The catalysed reaction is 3-methyl-2-oxobutanoate + acetyl-CoA + H2O = (2S)-2-isopropylmalate + CoA + H(+). It functions in the pathway amino-acid biosynthesis; L-leucine biosynthesis; L-leucine from 3-methyl-2-oxobutanoate: step 1/4. In terms of biological role, catalyzes the condensation of the acetyl group of acetyl-CoA with 3-methyl-2-oxobutanoate (2-ketoisovalerate) to form 3-carboxy-3-hydroxy-4-methylpentanoate (2-isopropylmalate). The polypeptide is 2-isopropylmalate synthase (Methylibium petroleiphilum (strain ATCC BAA-1232 / LMG 22953 / PM1)).